Reading from the N-terminus, the 350-residue chain is Glycerol-1-phosphate dehydrogenase [NAD(P)+] (350 aa).

Residues 97–101 and 119–122 contribute to the NAD(+) site; these read GSKID and TTPS. A substrate-binding site is contributed by Asp124. Residue Ser128 coordinates NAD(+). Asp171 provides a ligand contact to substrate. Zn(2+)-binding residues include Asp171 and His251. His255 contributes to the substrate binding site. Residue His267 coordinates Zn(2+).

This sequence belongs to the glycerol-1-phosphate dehydrogenase family. The cofactor is Zn(2+).

It localises to the cytoplasm. It catalyses the reaction sn-glycerol 1-phosphate + NAD(+) = dihydroxyacetone phosphate + NADH + H(+). It carries out the reaction sn-glycerol 1-phosphate + NADP(+) = dihydroxyacetone phosphate + NADPH + H(+). Its pathway is membrane lipid metabolism; glycerophospholipid metabolism. Functionally, catalyzes the NAD(P)H-dependent reduction of dihydroxyacetonephosphate (DHAP or glycerone phosphate) to glycerol 1-phosphate (G1P). The G1P thus generated is used as the glycerophosphate backbone of phospholipids in the cellular membranes of Archaea. This chain is Glycerol-1-phosphate dehydrogenase [NAD(P)+], found in Picrophilus torridus (strain ATCC 700027 / DSM 9790 / JCM 10055 / NBRC 100828 / KAW 2/3).